A 267-amino-acid polypeptide reads, in one-letter code: Orotidine 5'-phosphate decarboxylase (267 aa).

Substrate-binding positions include D37, 59–61, 91–100, Y217, and R235; these read KTH and DRKFADIGNT. Catalysis depends on K93, which acts as the Proton donor.

Belongs to the OMP decarboxylase family.

The catalysed reaction is orotidine 5'-phosphate + H(+) = UMP + CO2. It functions in the pathway pyrimidine metabolism; UMP biosynthesis via de novo pathway; UMP from orotate: step 2/2. The polypeptide is Orotidine 5'-phosphate decarboxylase (URA3) (Eremothecium gossypii (strain ATCC 10895 / CBS 109.51 / FGSC 9923 / NRRL Y-1056) (Yeast)).